A 356-amino-acid polypeptide reads, in one-letter code: MFS-type transporter tazK (356 aa).

The next 9 helical transmembrane spans lie at 12-32 (LPFFLGYVLFVLSQIPVALGH), 42-62 (FLGGVTSSVCPAITGGWLADF), 69-89 (GVAVAIFAATTLVGPSIGAIT), 102-122 (MTAWTTMILGIVSGVAGFIIL), 178-198 (ILLSMTIYISFTFGLIYLLFV), 211-231 (GAIDGTLPLLSICAGIIVGAF), 257-277 (LHPMIVGAVSLAIGLLWFAWT), 288-308 (ILAGIPIGVGVQVILLQSLAY), and 320-340 (AISGTMIVRSLVGGTFPLFAP).

Belongs to the major facilitator superfamily. CAR1 family.

The protein resides in the membrane. MFS-type transporter; part of the gene cluster that mediates the biosynthesis of azaterrilone A and other azaphilones, a class of fungal metabolites characterized by a highly oxygenated pyrano-quinone bicyclic core and exhibiting a broad range of bioactivities. The protein is MFS-type transporter tazK of Aspergillus terreus (strain NIH 2624 / FGSC A1156).